The following is a 252-amino-acid chain: Biosynthetic peptidoglycan transglycosylase (252 aa).

The helical transmembrane segment at 23-43 threads the bilayer; sequence IGFLLGCIVAGVVAMQVYFFL.

It belongs to the glycosyltransferase 51 family.

It localises to the cell inner membrane. The catalysed reaction is [GlcNAc-(1-&gt;4)-Mur2Ac(oyl-L-Ala-gamma-D-Glu-L-Lys-D-Ala-D-Ala)](n)-di-trans,octa-cis-undecaprenyl diphosphate + beta-D-GlcNAc-(1-&gt;4)-Mur2Ac(oyl-L-Ala-gamma-D-Glu-L-Lys-D-Ala-D-Ala)-di-trans,octa-cis-undecaprenyl diphosphate = [GlcNAc-(1-&gt;4)-Mur2Ac(oyl-L-Ala-gamma-D-Glu-L-Lys-D-Ala-D-Ala)](n+1)-di-trans,octa-cis-undecaprenyl diphosphate + di-trans,octa-cis-undecaprenyl diphosphate + H(+). Its pathway is cell wall biogenesis; peptidoglycan biosynthesis. In terms of biological role, peptidoglycan polymerase that catalyzes glycan chain elongation from lipid-linked precursors. The sequence is that of Biosynthetic peptidoglycan transglycosylase from Cupriavidus pinatubonensis (strain JMP 134 / LMG 1197) (Cupriavidus necator (strain JMP 134)).